A 142-amino-acid polypeptide reads, in one-letter code: Hemoglobin subunit alpha-A (142 aa).

The Globin domain maps to 2-142 (VLSAADKGNV…VATVLTAKYR (141 aa)). O2 is bound at residue His59. Residue His88 participates in heme b binding.

This sequence belongs to the globin family. In terms of assembly, heterotetramer of two alpha chains and two beta chains. Red blood cells.

Involved in oxygen transport from the lung to the various peripheral tissues. The sequence is that of Hemoglobin subunit alpha-A (HBAA) from Anseranas semipalmata (Magpie goose).